The following is a 212-amino-acid chain: Uridine kinase (212 aa).

13 to 20 contributes to the ATP binding site; it reads GGSGSGKT.

The protein belongs to the uridine kinase family.

Its subcellular location is the cytoplasm. It catalyses the reaction uridine + ATP = UMP + ADP + H(+). The catalysed reaction is cytidine + ATP = CMP + ADP + H(+). It participates in pyrimidine metabolism; CTP biosynthesis via salvage pathway; CTP from cytidine: step 1/3. The protein operates within pyrimidine metabolism; UMP biosynthesis via salvage pathway; UMP from uridine: step 1/1. In Bacillus cereus (strain ATCC 10987 / NRS 248), this protein is Uridine kinase.